The primary structure comprises 77 residues: Defensin-like protein 1 (77 aa).

An N-terminal signal peptide occupies residues 1 to 30 (MKLSVRFISAALLLFMVFIATGMGPVTVEA). 4 disulfide bridges follow: cysteine 33–cysteine 77, cysteine 44–cysteine 64, cysteine 50–cysteine 71, and cysteine 54–cysteine 73.

It belongs to the DEFL family. In terms of tissue distribution, expressed in the whole plant except roots.

It localises to the secreted. Its function is as follows. Confers broad-spectrum resistance to pathogens. The chain is Defensin-like protein 1 (PDF2.3) from Arabidopsis thaliana (Mouse-ear cress).